The primary structure comprises 574 residues: Septation ring formation regulator EzrA (574 aa).

Over 1 to 7 (MSSGIIL) the chain is Extracellular. Residues 8-26 (LIVAIVLLVIIAYLVGVII) traverse the membrane as a helical segment. The Cytoplasmic portion of the chain corresponds to 27 to 574 (RKRNDTLITS…YEKTRERIRF (548 aa)). Coiled-coil stretches lie at residues 102–131 (NFIR…REAL), 161–190 (ENED…FVAL), 276–379 (VTLD…QQEK), and 459–493 (QLEA…NLEE).

Belongs to the EzrA family.

It localises to the cell membrane. Negative regulator of FtsZ ring formation; modulates the frequency and position of FtsZ ring formation. Inhibits FtsZ ring formation at polar sites. Interacts either with FtsZ or with one of its binding partners to promote depolymerization. The sequence is that of Septation ring formation regulator EzrA from Streptococcus equi subsp. zooepidemicus (strain H70).